A 371-amino-acid polypeptide reads, in one-letter code: Chaperone protein DnaJ (371 aa).

In terms of domain architecture, J spans 5 to 69; the sequence is DYYEVLGLSK…QKRAQYDQFG (65 aa). The CR-type zinc finger occupies 133-215; the sequence is GKELNVEIPV…CHGSSKVRKR (83 aa). Zn(2+) is bound by residues C146, C149, C163, C166, C189, C192, C203, and C206. CXXCXGXG motif repeat units follow at residues 146-153, 163-170, 189-196, and 203-210; these read CDTCKGSG, CKHCSGSG, CGHCSGTG, and CTTCHGSS.

Belongs to the DnaJ family. Homodimer. Zn(2+) is required as a cofactor.

The protein resides in the cytoplasm. Its function is as follows. Participates actively in the response to hyperosmotic and heat shock by preventing the aggregation of stress-denatured proteins and by disaggregating proteins, also in an autonomous, DnaK-independent fashion. Unfolded proteins bind initially to DnaJ; upon interaction with the DnaJ-bound protein, DnaK hydrolyzes its bound ATP, resulting in the formation of a stable complex. GrpE releases ADP from DnaK; ATP binding to DnaK triggers the release of the substrate protein, thus completing the reaction cycle. Several rounds of ATP-dependent interactions between DnaJ, DnaK and GrpE are required for fully efficient folding. Also involved, together with DnaK and GrpE, in the DNA replication of plasmids through activation of initiation proteins. This Bacillus cereus (strain ATCC 14579 / DSM 31 / CCUG 7414 / JCM 2152 / NBRC 15305 / NCIMB 9373 / NCTC 2599 / NRRL B-3711) protein is Chaperone protein DnaJ.